The sequence spans 226 residues: CD9 antigen (226 aa).

Over 1 to 12 the chain is Cytoplasmic; that stretch reads MPVKGGTKCIKY. Cys-9 carries S-palmitoyl cysteine lipidation. A helical transmembrane segment spans residues 13–33; sequence LLFGFNFIFWLAGIAVLAVGL. Residues 34–53 are Extracellular-facing; it reads WLRFDSQTKSIFEQDSQPSS. The helical transmembrane segment at 54–74 threads the bilayer; that stretch reads FYTGVYILIGAGALMMLVGFL. The Cytoplasmic portion of the chain corresponds to 75–85; the sequence is GCCGAVQESQC. 3 S-palmitoyl cysteine lipidation sites follow: Cys-76, Cys-77, and Cys-85. A helical transmembrane segment spans residues 86-109; sequence MLGLFFGFLLVIFAIEIAAAIWGY. Residues 110–193 lie on the Extracellular side of the membrane; it reads SHKDEVIQEV…KEVFHNKFHI (84 aa). 2 cysteine pairs are disulfide-bonded: Cys-150/Cys-179 and Cys-151/Cys-165. A helical transmembrane segment spans residues 194-219; the sequence is IGAVGIGIAVVMIFGMIFSMILCCAI. S-palmitoyl cysteine attachment occurs at residues Cys-216 and Cys-217. Residues 220–226 lie on the Cytoplasmic side of the membrane; that stretch reads RRSREMV.

This sequence belongs to the tetraspanin (TM4SF) family. Forms both disulfide-linked homodimers and higher homooligomers as well as heterooligomers with other members of the tetraspanin family. Interacts (via the second extracellular domain) with integrin ITGAV:ITGB3. Interacts with integrin ITGA6:ITGB1; interaction takes place in oocytes and is involved in sperm-egg fusion. Part of integrin-tetraspanin complexes composed of CD81, beta-1 and beta-2 integrins in the membrane of monocyte/macrophages. Interacts with CD63; identified in a complex with CD63 and ITGB3. Associates with CR2/CD21 and with PTGFRN/CD9P1. Part of a complex composed of CD9, CD81, PTGFRN and IGSF8. Interacts directly with IGSF8. Interacts with PDPN; this interaction is homophilic and attenuates platelet aggregation and pulmonary metastasis induced by PDPN. Interacts (on T cell side) with CD81 at immunological synapses between antigen-presenting cells and T cells. In terms of processing, palmitoylated at a low, basal level in unstimulated platelets. The level of palmitoylation increases when platelets are activated by thrombin (in vitro). The protein exists in three forms with molecular masses between 22 and 27 kDa, and is known to carry covalently linked fatty acids. Palmitoylation by ZDHHC2 regulates CD9 expression, association with other tetraspanin family proteins and function in cell adhesion.

The protein resides in the cell membrane. The protein localises to the membrane. It localises to the secreted. Its subcellular location is the extracellular exosome. Its function is as follows. Integral membrane protein associated with integrins, which regulates different processes, such as sperm-egg fusion, platelet activation and aggregation, and cell adhesion. Present at the cell surface of oocytes and plays a key role in sperm-egg fusion, possibly by organizing multiprotein complexes and the morphology of the membrane required for the fusion. In myoblasts, associates with CD81 and PTGFRN and inhibits myotube fusion during muscle regeneration. In macrophages, associates with CD81 and beta-1 and beta-2 integrins, and prevents macrophage fusion into multinucleated giant cells specialized in ingesting complement-opsonized large particles. Also prevents the fusion between mononuclear cell progenitors into osteoclasts in charge of bone resorption. Acts as a receptor for PSG17. Involved in platelet activation and aggregation. Regulates paranodal junction formation. Involved in cell adhesion, cell motility and tumor metastasis. This is CD9 antigen from Felis catus (Cat).